Reading from the N-terminus, the 237-residue chain is Uridylate kinase (237 aa).

10 to 13 serves as a coordination point for ATP; the sequence is KLSG. G51 lines the UMP pocket. G52 and R56 together coordinate ATP. Residues D71 and 132–139 each bind UMP; that span reads MGMPFFST. 3 residues coordinate ATP: N160, Y166, and D169.

The protein belongs to the UMP kinase family. In terms of assembly, homohexamer.

It is found in the cytoplasm. The enzyme catalyses UMP + ATP = UDP + ADP. The protein operates within pyrimidine metabolism; CTP biosynthesis via de novo pathway; UDP from UMP (UMPK route): step 1/1. With respect to regulation, inhibited by UTP. Its function is as follows. Catalyzes the reversible phosphorylation of UMP to UDP. This Nocardioides sp. (strain ATCC BAA-499 / JS614) protein is Uridylate kinase.